The primary structure comprises 504 residues: Zinc finger protein AEBP2 (504 aa).

The interval 1–219 (MAAALADMAD…SRMDSEDSIS (219 aa)) is disordered. Ala-2 carries the post-translational modification N-acetylalanine. Residues 16–30 (RLSPLSPGSPGPAAR) are compositionally biased toward low complexity. 3 positions are modified to phosphoserine: Ser-18, Ser-21, and Ser-24. Residues 36-49 (PEEEEEEDDEEAEA) are compositionally biased toward acidic residues. Gly residues predominate over residues 59-69 (GGAGGGAGGGE). The segment covering 86-110 (GDEDEDEEDDEDEGSSSGGAEEESS) has biased composition (acidic residues). The segment covering 129–140 (SLSPGAASSSSG) has biased composition (low complexity). Phosphoserine is present on Ser-131. Basic and acidic residues predominate over residues 142-153 (GDGKEGLEEPKG). Gly residues-rich tracts occupy residues 154-168 (PRGG…GGGS) and 178-189 (GDEGYGTGGGGS). A phosphoserine mark is found at Ser-199, Ser-203, and Ser-204. The tract at residues 202–287 (MSSDGEPLSR…IHVDGQRGGV (86 aa)) is interaction with RBBP4. A C2H2-type 1 zinc finger spans residues 254–279 (YNCCWDQCQACFNSSPDLADHIRSIH). The C2H2-type 2; degenerate zinc finger occupies 293-315 (KGCKVYNTPSTSQSWLQRHMLTH). The segment at 321-345 (FKCVVGGCNASFASQGGLARHVPTH) adopts a C2H2-type 3 zinc-finger fold. A compositionally biased stretch (polar residues) spans 345–358 (HFSQQNSSKVSSQP). Positions 345-387 (HFSQQNSSKVSSQPKAKEESPSKAGMNKRRKLKNKRRRSLPRP) are disordered. Positions 370–385 (MNKRRKLKNKRRRSLP) are enriched in basic residues. Ser-383 carries the post-translational modification Phosphoserine. The tract at residues 400 to 471 (RHRAICFNLS…QLKTKVVHLS (72 aa)) is interaction with SUZ12. The segment at 488 to 504 (TMPQKRLKRFDILNFPR) is important for nucleosome binding activity of the PRC2 complex.

The protein belongs to the AEBP2/jing C2H2-type zinc-finger family. In terms of assembly, self-associates. Associates with the PRC2 complex, which consists of the core components EED, EZH1 or EZH2, SUZ12, and RBBP4, and various combinations of accessory subunits including AEBP2, JARID2, PHF19, MTF2 and EPOP. Found in a monomeric PRC2.2 (class 2) complex consisting of at least SUZ12, RBBP4, AEBP2 and JARID2. Within the PRC2 complex, interacts directly with SUZ12; competes with PHF19 for SUZ12 binding. Interacts with EED, EZH2, and RBBP4. May also interact with RBBP7. In terms of tissue distribution, expressed in brain, brown adipose tissue, white adipose tissue, heart, kidney, lung, skeletal muscle, small intestine and spleen. Expressed at low levels in liver.

Its subcellular location is the nucleus. Its function is as follows. Acts as an accessory subunit for the core Polycomb repressive complex 2 (PRC2), which mediates histone H3K27 (H3K27me3) trimethylation on chromatin leading to transcriptional repression of the affected target gene. Plays a role in nucleosome localization of the PRC2 complex. The chain is Zinc finger protein AEBP2 (Aebp2) from Mus musculus (Mouse).